Reading from the N-terminus, the 407-residue chain is Putative cystathionine beta-lyase (407 aa).

Lysine 237 is subject to N6-(pyridoxal phosphate)lysine.

Belongs to the class-II pyridoxal-phosphate-dependent aminotransferase family. MalY/PatB cystathionine beta-lyase subfamily. The cofactor is pyridoxal 5'-phosphate.

It carries out the reaction L,L-cystathionine + H2O = L-homocysteine + pyruvate + NH4(+). The enzyme catalyses an S-substituted L-cysteine + H2O = a thiol + pyruvate + NH4(+). It functions in the pathway amino-acid biosynthesis; L-methionine biosynthesis via de novo pathway; L-homocysteine from L-cystathionine: step 1/1. The chain is Putative cystathionine beta-lyase from Mycobacterium tuberculosis (strain CDC 1551 / Oshkosh).